Reading from the N-terminus, the 282-residue chain is UDP-3-O-acyl-N-acetylglucosamine deacetylase (282 aa).

The Zn(2+) site is built by histidine 80, histidine 240, and aspartate 244. Histidine 267 serves as the catalytic Proton donor.

It belongs to the LpxC family. Zn(2+) serves as cofactor.

Its subcellular location is the plastid. The protein localises to the chloroplast. It carries out the reaction a UDP-3-O-[(3R)-3-hydroxyacyl]-N-acetyl-alpha-D-glucosamine + H2O = a UDP-3-O-[(3R)-3-hydroxyacyl]-alpha-D-glucosamine + acetate. It participates in glycolipid biosynthesis; lipid IV(A) biosynthesis; lipid IV(A) from (3R)-3-hydroxytetradecanoyl-[acyl-carrier-protein] and UDP-N-acetyl-alpha-D-glucosamine: step 2/6. Functionally, catalyzes the hydrolysis of UDP-3-O-myristoyl-N-acetylglucosamine to form UDP-3-O-myristoylglucosamine and acetate. Involved in the biosynthesis of lipid A, a phosphorylated glycolipid that in bacteria anchors the lipopolysaccharide to the outer membrane of the cell. The target for the lipopolysaccharides produced in the chloroplast could either be the cell envelope of the eukaryote or the plastid membrane. The sequence is that of UDP-3-O-acyl-N-acetylglucosamine deacetylase from Cyanidium caldarium (Red alga).